Consider the following 53-residue polypeptide: Serine rich endogenous peptide 3 (53 aa).

The N-terminal stretch at 1–26 (MTKKGPLNLRLLLLLLVVLLPSCSNC) is a signal peptide. Residues 37-53 (SSEWRRKMITVWSKSSY) carry the SCOOP motif motif. A SxS motif essential for MIK2 binding motif is present at residues 49–51 (SKS).

It belongs to the serine rich endogenous peptide (SCOOP) phytocytokine family. As to quaternary structure, interacts with MIK2 (via extracellular leucine-rich repeat domain); this interaction triggers the formation of complex between MIK2 and the BAK1/SERK3 and SERK4 coreceptors, and subsequent BAK1 activation by phosphorylation.

Its subcellular location is the cell membrane. The protein resides in the secreted. It localises to the extracellular space. The protein localises to the apoplast. In terms of biological role, brassicaceae-specific phytocytokine (plant endogenous peptide released into the apoplast) perceived by MIK2 in a BAK1/SERK3 and SERK4 coreceptors-dependent manner, that modulates various physiological and antimicrobial processes including growth prevention and reactive oxygen species (ROS) response regulation. This chain is Serine rich endogenous peptide 3, found in Arabidopsis thaliana (Mouse-ear cress).